A 257-amino-acid chain; its full sequence is 5-oxoprolinase subunit A (257 aa).

The protein belongs to the LamB/PxpA family. In terms of assembly, forms a complex composed of PxpA, PxpB and PxpC.

It carries out the reaction 5-oxo-L-proline + ATP + 2 H2O = L-glutamate + ADP + phosphate + H(+). In terms of biological role, catalyzes the cleavage of 5-oxoproline to form L-glutamate coupled to the hydrolysis of ATP to ADP and inorganic phosphate. The polypeptide is 5-oxoprolinase subunit A (Oceanobacillus iheyensis (strain DSM 14371 / CIP 107618 / JCM 11309 / KCTC 3954 / HTE831)).